A 224-amino-acid polypeptide reads, in one-letter code: Adenosylcobinamide-GDP ribazoletransferase (224 aa).

The next 4 helical transmembrane spans lie at 21 to 41 (LSFK…AAIP), 44 to 64 (LLYL…ATGL), 97 to 117 (GGIF…HSPL), and 156 to 176 (WPAA…TTAV).

This sequence belongs to the CobS family. The cofactor is Mg(2+).

It localises to the cell membrane. The catalysed reaction is alpha-ribazole + adenosylcob(III)inamide-GDP = adenosylcob(III)alamin + GMP + H(+). It catalyses the reaction alpha-ribazole 5'-phosphate + adenosylcob(III)inamide-GDP = adenosylcob(III)alamin 5'-phosphate + GMP + H(+). It participates in cofactor biosynthesis; adenosylcobalamin biosynthesis; adenosylcobalamin from cob(II)yrinate a,c-diamide: step 7/7. Joins adenosylcobinamide-GDP and alpha-ribazole to generate adenosylcobalamin (Ado-cobalamin). Also synthesizes adenosylcobalamin 5'-phosphate from adenosylcobinamide-GDP and alpha-ribazole 5'-phosphate. This chain is Adenosylcobinamide-GDP ribazoletransferase, found in Pyrobaculum aerophilum (strain ATCC 51768 / DSM 7523 / JCM 9630 / CIP 104966 / NBRC 100827 / IM2).